Reading from the N-terminus, the 207-residue chain is Abscisic acid receptor PYL4 (207 aa).

The tract at residues 45–195 (HEVGPNQCCS…NLQSLAKIAE (151 aa)) is START-like. Cys-52 and Cys-176 are disulfide-bonded. Abscisate-binding positions include Lys-81, 111–116 (AASSTE), 138–144 (RLSNYRS), and Glu-160. The Gate loop motif lies at 107–111 (SGLPA). The Latch loop motif lies at 137–139 (HRL).

Belongs to the PYR/PYL/RCAR abscisic acid intracellular receptor family. Monomer. Homodimer. Binds ABA on one subunit only. Interacts with HAB1, ABI1 and ABI2, and possibly with other PP2Cs. Binds to CARs protein in an ABA-independent manner, both at the plasma membrane and in the nucleus. Interacts directly with CAR1 and CAR4. Interacts with TOPP1. Interacts with DDA1. Interacts with FREE1 (via N-terminus). Interacts with the E3 ubiquitin-protein ligase RSL1 at the plasma membrane. Ubiquitynated and degraded by the proteasome upon binding to the E3 ubiquitin-protein ligase RSL1 at the plasma membrane.

It is found in the cytoplasm. It localises to the nucleus. Its subcellular location is the cell membrane. The protein resides in the vacuole. In terms of biological role, receptor for abscisic acid (ABA) required for ABA-mediated responses such as stomatal closure and germination inhibition. Inhibits the activity of group-A protein phosphatases type 2C (PP2Cs) when activated by ABA. Can be activated by both (-)-ABA and (+)-ABA. The chain is Abscisic acid receptor PYL4 from Arabidopsis thaliana (Mouse-ear cress).